Consider the following 74-residue polypeptide: Translation initiation factor IF-1, chloroplastic (74 aa).

Residues 1–72 form the S1-like domain; the sequence is MERQNLIEME…TKGRITYRLR (72 aa).

It belongs to the IF-1 family. As to quaternary structure, component of the 30S ribosomal translation pre-initiation complex which assembles on the 30S ribosome in the order IF-2 and IF-3, IF-1 and N-formylmethionyl-tRNA(fMet); mRNA recruitment can occur at any time during PIC assembly.

It localises to the plastid. Its subcellular location is the chloroplast. One of the essential components for the initiation of protein synthesis. Stabilizes the binding of IF-2 and IF-3 on the 30S subunit to which N-formylmethionyl-tRNA(fMet) subsequently binds. Helps modulate mRNA selection, yielding the 30S pre-initiation complex (PIC). Upon addition of the 50S ribosomal subunit IF-1, IF-2 and IF-3 are released leaving the mature 70S translation initiation complex. In Mesostigma viride (Green alga), this protein is Translation initiation factor IF-1, chloroplastic.